The primary structure comprises 418 residues: Neurotensin receptor type 1 (418 aa).

Over 1–67 (MRLNSSAPGT…TDIYSKVLVT (67 aa)) the chain is Extracellular. N-linked (GlcNAc...) asparagine glycosylation is found at asparagine 4, asparagine 37, and asparagine 41. Residues 68-88 (AVYLALFVVGTVGNTVTAFTL) form a helical membrane-spanning segment. Over 89–102 (ARKKSLQSLQSTVH) the chain is Cytoplasmic. Residues 103-122 (YHLGSLALSDLLTLLLAMPV) traverse the membrane as a helical segment. Residues 123 to 142 (ELYNFIWVHHPWAFGDAGCR) lie on the Extracellular side of the membrane. Cysteine 141 and cysteine 224 form a disulfide bridge. Residues 143 to 164 (GYYFLRDACTYATALNVASLSV) traverse the membrane as a helical segment. Topologically, residues 165–184 (ERYLAICHPFKAKTLMSRSR) are cytoplasmic. A helical transmembrane segment spans residues 185–205 (TKKFISAIWLASALLAVPMLF). Over 206-234 (TMGEQNRSADGQHAGGLVCTPTIHTATVK) the chain is Extracellular. Residues 235-259 (VVIQVNTFMSFIFPMVVISVLNTII) form a helical membrane-spanning segment. Over 260–303 (ANKLTVMVRQAAEQGQVCTVGGEHSTFSMAIEPGRVQALRHGVR) the chain is Cytoplasmic. Residues 304 to 325 (VLRAVVIAFVVCWLPYHVRRLM) form a helical membrane-spanning segment. The neurotensin binding stretch occupies residues 321-344 (VRRLMFCYISDEQWTPFLYDFYHY). Over 326 to 343 (FCYISDEQWTPFLYDFYH) the chain is Extracellular. Residues 344 to 364 (YFYMVTNALFYVSSTINPILY) traverse the membrane as a helical segment. The Cytoplasmic segment spans residues 365 to 418 (NLVSANFRHIFLATLACLCPVWRRRRKRPAFSRKADSVSSNHTLSSNATRETLY). S-palmitoyl cysteine attachment occurs at residues cysteine 381 and cysteine 383.

Belongs to the G-protein coupled receptor 1 family. Neurotensin receptor subfamily. NTSR1 sub-subfamily. Interacts (palmitoylated form) with GNA11. N-glycosylated. In terms of processing, palmitoylated; this is required for normal localization at membrane rafts and normal GNA11-mediated activation of down-stream signaling cascades. The palmitoylation level increases in response to neurotensin treatment. In terms of tissue distribution, expressed in prostate (at protein level). Detected in colon and peripheral blood mononuclear cells. Detected at very low levels in brain.

It localises to the cell membrane. It is found in the membrane raft. G-protein coupled receptor for the tridecapeptide neurotensin (NTS). Signaling is effected via G proteins that activate a phosphatidylinositol-calcium second messenger system. Signaling leads to the activation of downstream MAP kinases and protects cells against apoptosis. This Homo sapiens (Human) protein is Neurotensin receptor type 1 (NTSR1).